The following is a 128-amino-acid chain: MSATTDEILEKLQSLTLLEAAELVKQIEETFGVSAAAPVGGMVMAAPGAAAAEEVEEKTEFDVILDEVPADKKIAVLKVVRGITGLGLKEAKEMVESAPKPIKEATGKEDAEAIKKQLEDAGAKASVK.

Belongs to the bacterial ribosomal protein bL12 family. In terms of assembly, homodimer. Part of the ribosomal stalk of the 50S ribosomal subunit. Forms a multimeric L10(L12)X complex, where L10 forms an elongated spine to which 2 to 4 L12 dimers bind in a sequential fashion. Binds GTP-bound translation factors.

Forms part of the ribosomal stalk which helps the ribosome interact with GTP-bound translation factors. Is thus essential for accurate translation. The sequence is that of Large ribosomal subunit protein bL12 from Picosynechococcus sp. (strain ATCC 27264 / PCC 7002 / PR-6) (Agmenellum quadruplicatum).